Reading from the N-terminus, the 747-residue chain is MGRGPWDAGPSRRLLPLLLLLGLARGAAGAPGPDGLDVCATCHEHATCQQREGKKICICNYGFVGNGRTQCVDKNECQFGATLVCGNHTSCHNTPGGFYCICLEGYRATNNNKTFIPNDGTFCTDIDECEVSGLCRHGGRCVNTHGSFECYCMDGYLPRNGPEPFHPTTDATSCTEIDCGTPPEVPDGYIIGNYTSSLGSQVRYACREGFFSVPEDTVSSCTGLGTWESPKLHCQEINCGNPPEMRHAILVGNHSSRLGGVARYVCQEGFESPGGKITSVCTEKGTWRESTLTCTEILTKINDVSLFNDTCVRWQINSRRINPKISYVISIKGQRLDPMESVREETVNLTTDSRTPEVCLALYPGTNYTVNISTAPPRRSMPAVIGFQTAEVDLLEDDGSFNISIFNETCLKLNRRSRKVGSEHMYQFTVLGQRWYLANFSHATSFNFTTREQVPVVCLDLYPTTDYTVNVTLLRSPKRHSVQITIATPPAVKQTISNISGFNETCLRWRSIKTADMEEMYLFHIWGQRWYQKEFAQEMTFNISSSSRDPEVCLDLRPGTNYNVSLRALSSELPVVISLTTQITEPPLPEVEFFTVHRGPLPRLRLRKAKEKNGPISSYQVLVLPLALQSTFSCDSEGASSFFSNASDADGYVAAELLAKDVPDDAMEIPIGDRLYYGEYYNAPLKRGSDYCIILRITSEWNKVRRHSCAVWAQVKDSSLMLLQMAGVGLGSLAVVIILTFLSFSAV.

The first 29 residues, 1–29 (MGRGPWDAGPSRRLLPLLLLLGLARGAAG), serve as a signal peptide directing secretion. Residues 30–721 (APGPDGLDVC…WAQVKDSSLM (692 aa)) are Extracellular-facing. The region spanning 35–72 (GLDVCATCHEHATCQQREGKKICICNYGFVGNGRTQCV) is the EGF-like 1 domain. 5 disulfides stabilise this stretch: C39/C48, C42/C57, C59/C71, C77/C91, and C85/C100. The 40-residue stretch at 73–112 (DKNECQFGATLVCGNHTSCHNTPGGFYCICLEGYRATNNN) folds into the EGF-like 2; calcium-binding domain. N-linked (GlcNAc...) asparagine glycosylation is found at N87 and N112. In terms of domain architecture, EGF-like 3; calcium-binding spans 125-162 (DIDECEVSGLCRHGGRCVNTHGSFECYCMDGYLPRNGP). Disulfide bonds link C129–C141, C135–C150, C179–C221, C206–C234, C239–C281, and C266–C294. Sushi domains are found at residues 177–236 (IDCG…HCQE) and 237–296 (INCG…TCTE). N193 carries N-linked (GlcNAc...) asparagine glycosylation. Residue N253 is glycosylated (N-linked (GlcNAc...) asparagine). Residues N348, N367, and N563 are each glycosylated (N-linked (GlcNAc...) asparagine). The chain crosses the membrane as a helical span at residues 722 to 742 (LLQMAGVGLGSLAVVIILTFL). Topologically, residues 743–747 (SFSAV) are cytoplasmic.

It localises to the membrane. In Homo sapiens (Human), this protein is Sushi domain-containing protein 1 (SUSD1).